The following is a 312-amino-acid chain: Lipid-translocating exporter-like protein RTA1 (312 aa).

Residues 1–21 (MSPESKKITAHGSTSMPLSRT) are disordered. Positions 11–21 (HGSTSMPLSRT) are enriched in polar residues. The next 6 helical transmembrane spans lie at 29–49 (IPLTVGAIFSVIGFLQRFFLA), 61–81 (LSTMFILGAGPTYAGADYFIC), 103–123 (FITFDVLAEVCVWTGAGLLAG), 142–162 (AMITQAFLFTSFVAILASFHV), 183–203 (FMMVVHSLYASSIFIIIRSAY), and 223–243 (SLMLLNTAMFNVFHPGHILPI). N-linked (GlcNAc...) asparagine glycosylation is found at asparagine 258 and asparagine 304.

This sequence belongs to the lipid-translocating exporter (LTE) (TC 9.A.26.1) family.

It is found in the membrane. Its pathway is siderophore biosynthesis. Its function is as follows. Lipid-translocating exporter-like protein; part of the gene cluster that mediates the biosynthesis of hydroxamate-containing siderophores that play a critical role in virulence via intracellular iron acquisition during macrophage infection. This Ajellomyces capsulatus (Darling's disease fungus) protein is Lipid-translocating exporter-like protein RTA1.